The chain runs to 371 residues: MSLMPFAPSRPLSIGVELELQLLGCNDYNLAPSAPEILRRVAKRTHPGEIKPEMTRSMIEINTSVQQEYAGLVTELRALRDVVSEAGCFLNVAVAGGGTHPFQHWSEQKIFDAPRFHYLSELYGYLAKQFTIFGQHVHIGCPGPDEALHLTHMLSRYIPHFIALSASSPFVQGHDTGFASARLNSVFSFPLSGRAPFVLRWNDFEKFFAKMTGTGVVESMKDFYWDIRPKPEFGTIEVRVCDTPLTVEIAASIACYIQAMSRYIMVEQRMAPEEDDYLVYTFNRFQACRFGLEGVFIDPRTHQQRSIREDIMEMLEHISDHARELHAVEAMERIREILIVGNGTSWQRRAYASEHNLADVMQLQAELWMGN.

The protein belongs to the glutamate--cysteine ligase type 2 family. YbdK subfamily.

It catalyses the reaction L-cysteine + L-glutamate + ATP = gamma-L-glutamyl-L-cysteine + ADP + phosphate + H(+). In terms of biological role, ATP-dependent carboxylate-amine ligase which exhibits weak glutamate--cysteine ligase activity. This Nitrosospira multiformis (strain ATCC 25196 / NCIMB 11849 / C 71) protein is Putative glutamate--cysteine ligase 2.